Reading from the N-terminus, the 186-residue chain is Mating-type-like protein ALPHA2 (186 aa).

The segment at residues 112-174 is a DNA-binding region (homeobox; TALE-type); sequence KKIKSRRLTK…NRRRKEKNTK (63 aa).

Belongs to the TALE/M-ATYP homeobox family. Forms a heterodimer with A1.

The protein localises to the nucleus. Its function is as follows. Mating type proteins are sequence specific DNA-binding proteins that act as master switches in yeast differentiation by controlling gene expression in a cell type-specific fashion. Transcriptional corepressor that acts in conjunction with A1 to repress transcription both of homozygote-specific genes and of genes necessary for the white-opaque switch, a prerequisite for mating. The chain is Mating-type-like protein ALPHA2 (MTLALPHA2) from Candida albicans (strain SC5314 / ATCC MYA-2876) (Yeast).